We begin with the raw amino-acid sequence, 696 residues long: Glycine--tRNA ligase beta subunit (696 aa).

The protein belongs to the class-II aminoacyl-tRNA synthetase family. As to quaternary structure, tetramer of two alpha and two beta subunits.

The protein localises to the cytoplasm. The catalysed reaction is tRNA(Gly) + glycine + ATP = glycyl-tRNA(Gly) + AMP + diphosphate. This chain is Glycine--tRNA ligase beta subunit, found in Oleidesulfovibrio alaskensis (strain ATCC BAA-1058 / DSM 17464 / G20) (Desulfovibrio alaskensis).